The chain runs to 172 residues: MNRQEKSVEISELSKIFSSSGSVVVAHYKGISVAQIKDLRKKVREAGGGVKVAKNRLVKIAVSDTSLKGVSDLFVGQSLIVYSVDPIVAPKISVSFANDNKQFVVLGGILEKDILDQDSIKRIASLPNIDGIRSMIISAIQFNSTRLVNLLNAPQTKIVRAISAFVDKNQQS.

Belongs to the universal ribosomal protein uL10 family. Part of the ribosomal stalk of the 50S ribosomal subunit. The N-terminus interacts with L11 and the large rRNA to form the base of the stalk. The C-terminus forms an elongated spine to which L12 dimers bind in a sequential fashion forming a multimeric L10(L12)X complex.

Its function is as follows. Forms part of the ribosomal stalk, playing a central role in the interaction of the ribosome with GTP-bound translation factors. The sequence is that of Large ribosomal subunit protein uL10 (rplJ) from Liberibacter africanus (Citrus greening disease).